Reading from the N-terminus, the 1127-residue chain is Cellulose synthase-like protein D1 (1127 aa).

Residues 1–24 are disordered; sequence MASKGILKNGGKPPTAPSSAAPTV. Helical transmembrane passes span 262–282 and 292–312; these read VISPYRLLVLIRLVALGLFLM and AIWLWGMSIVCELWFALSWVL. Residues aspartate 392 and aspartate 828 contribute to the active site. 6 consecutive transmembrane segments (helical) span residues 910-930, 936-956, 982-1002, 1025-1045, 1059-1079, and 1089-1109; these read VFLIVYCFLPALSLFSGQFIV, TFLTYLLIITITLCLLAMLEI, LAAVLQGLLKVIAGIEISFTL, SLMIPPLTIIMINLVAIAVGF, LLGGVFFSFWVLAHLYPFAKG, and TIVYVWSGLVAITISLLWIAI.

It belongs to the glycosyltransferase 2 family. Plant cellulose synthase-like D subfamily.

The protein localises to the golgi apparatus membrane. Functionally, thought to be a Golgi-localized beta-glycan synthase that polymerize the backbones of noncellulosic polysaccharides (hemicelluloses) of plant cell wall. This chain is Cellulose synthase-like protein D1 (CSLD1), found in Oryza sativa subsp. indica (Rice).